The primary structure comprises 436 residues: MILLQVICTIWTCLFIPLLNAEEFVPKVTETLSEYSFSLESFDDSNSLIRLDNQVVWISSDSGENWEAVKEIEGHILELIVDPLHGQDRAFVSIHLSPKFYVTDDRGKSWRALTIPVSENCRLGTSCSIATHPTDKKYLIADCPCFINDNGYIQIQNETYFTNDGESFYNIEPSLKKKEDDHITSSSCNFVKSSKDSDIEGNDASILCLFSNHGYDSDRHLSAAYTQLALSTDGGKTFKKFDEFNDKIIYQYKILKSHIIVSTQDDRYNEMSPMDIWISNDASTFQKARLPAQVRHVHMYGIYEDSIGRIIIPISTIFTDEKNDQPAPSEILISDSQGLKFLPVEWTINPHFGYIDIASPHFLEGTIIGSFHPSFDYSHNKGKYNKKIARYETKISVDNGLTWSNLKVVDEENADSFPCDITRPERCSLQNPFYSI.

The helical transmembrane segment at M1–A21 threads the bilayer. BNR repeat units lie at residues W57–A68 and Y101–A112. N-linked (GlcNAc...) asparagine glycosylation occurs at N157. 2 BNR repeats span residues A229 to K240 and K394 to N405.

The protein localises to the membrane. This is an uncharacterized protein from Saccharomyces cerevisiae (strain ATCC 204508 / S288c) (Baker's yeast).